A 584-amino-acid chain; its full sequence is Transcription factor COE1 (584 aa).

An N-acetylmethionine modification is found at methionine 1. The segment covering 1 to 14 has biased composition (polar residues); the sequence is MFGIQESIQRSGSS. The segment at 1–21 is disordered; sequence MFGIQESIQRSGSSMKEEPLG. Lysine 16 is covalently cross-linked (Glycyl lysine isopeptide (Lys-Gly) (interchain with G-Cter in SUMO1); alternate). A Glycyl lysine isopeptide (Lys-Gly) (interchain with G-Cter in SUMO2); alternate cross-link involves residue lysine 16. Residues 63–66 form an interaction with DNA region; that stretch reads RKSN. The C5-type zinc finger occupies 151-170; sequence CRVLLTHEIMCSRCCDKKSC. Interaction with DNA stretches follow at residues 197 to 204 and 236 to 239; these read NCLKNAGN and NNSK. Residues 255 to 338 form the IPT/TIG domain; sequence PCIKAISPSE…KGTPGRFIYT (84 aa). A disordered region spans residues 450–473; that stretch reads GFTRNSSSVSPHGYVPSTTPQQTN.

Belongs to the COE family. In terms of assembly, homodimer. Interacts with ZNF423 and ZNF521, leading to prevent EBF1 to bind DNA and activate target genes. Interacts with CCR4-NOT component CNOT3. As to expression, expressed exclusively in olfactory receptor neurons and their precursors.

The protein resides in the nucleus. Its function is as follows. Key pioneer transcription factor of B-cell specification and commitment. Recognizes variations of the palindromic sequence 5'-ATTCCCNNGGGAATT-3'. Operates in a transcription factor network to activate B-cell-specific genes and repress genes associated with alternative cell fates. For instance, positively regulates many B-cell specific genes including BCR or CD40 while repressing genes that direct cells into alternative lineages, including GATA3 and TCF7 for the T-cell lineage. In addition to its role during lymphopoiesis, controls the thermogenic gene program in adipocytes during development and in response to environmental cold. The polypeptide is Transcription factor COE1 (Ebf1) (Rattus norvegicus (Rat)).